The chain runs to 550 residues: MAAPAGGGGSAVSVLAPNGRRHTVKVTPSTVLLQVLEDTCRRQDFNPSEYDLKFQRTVLDLSLQWRFANLPNNAKLEMVPVSRSREGPENIVRIAFQLDDGSRLQDAFCSRQTLWELLSHFAQTRERLQQLGEKTPVCVYMRNEVTGRAALQNTTLQSLGLTGGSATIRFVIKQCDTAGKQESIAVRSKAPGSPVSSLSADQASSSTLLPLNSGEFSRGDLNHEGDANTSGTGLEGGPKPTDAQTKQSTSEPASAPFVPFSGGGQRLGGPSASLRPLTSPSANSSKSFSGPGGPSKPKKPKPGEEPQQEPEPPVDRDPVVYHPDLEDLLQPWPAEVPDEFFEVTVDDVRRRLAQLKSERKRLEEAPLVTKAFREAQMKEKLERYPKVALRVLFPDRYILQGFFRPSETVGDLRDFVRSHLGNPELSFYLFIAPPKMVLDDHTLTLFQANLFPAALVHFGAEEPTGLYLEPGLLEHTVSPSTADVLVARCMSRASGSPPLLPAPDPVSLESEPIAEDGALGPPEPIQGTAQPVKRSLGKVPKWLKLPASKR.

An N-acetylalanine modification is found at Ala2. The tract at residues 185–320 (AVRSKAPGSP…EPPVDRDPVV (136 aa)) is disordered. Ser193 is subject to Phosphoserine. Residues 193 to 206 (SPVSSLSADQASSS) are compositionally biased toward low complexity. Residues 217 to 226 (SRGDLNHEGD) are compositionally biased toward basic and acidic residues. The span at 242–252 (DAQTKQSTSEP) shows a compositional bias: polar residues. The tract at residues 313–376 (PVDRDPVVYH…LVTKAFREAQ (64 aa)) is interaction with GLUT4. Positions 382-458 (ERYPKVALRV…NLFPAALVHF (77 aa)) constitute a UBX domain. Position 496 is a phosphoserine (Ser496). Residues 496 to 550 (SPPLLPAPDPVSLESEPIAEDGALGPPEPIQGTAQPVKRSLGKVPKWLKLPASKR) form a disordered region.

Interacts with VCP. Interacts with VCPKMT. Interacts with GLUT4. In terms of tissue distribution, ubiquitous.

The protein resides in the endomembrane system. It is found in the endoplasmic reticulum-Golgi intermediate compartment membrane. Its subcellular location is the cytoplasm. The protein localises to the nucleus. Enhances VCP methylation catalyzed by VCPKMT. Tethering protein that sequesters GLUT4-containing vesicles in the cytoplasm in the absence of insulin. Modulates the amount of GLUT4 that is available at the cell surface. The protein is Tether containing UBX domain for GLUT4 (Aspscr1) of Mus musculus (Mouse).